The chain runs to 204 residues: Nucleoside triphosphate pyrophosphatase (204 aa).

The Proton acceptor role is filled by Asp-79.

Belongs to the Maf family. Requires a divalent metal cation as cofactor.

It is found in the cytoplasm. It carries out the reaction a ribonucleoside 5'-triphosphate + H2O = a ribonucleoside 5'-phosphate + diphosphate + H(+). It catalyses the reaction a 2'-deoxyribonucleoside 5'-triphosphate + H2O = a 2'-deoxyribonucleoside 5'-phosphate + diphosphate + H(+). Functionally, nucleoside triphosphate pyrophosphatase. May have a dual role in cell division arrest and in preventing the incorporation of modified nucleotides into cellular nucleic acids. This is Nucleoside triphosphate pyrophosphatase from Trichodesmium erythraeum (strain IMS101).